A 1171-amino-acid polypeptide reads, in one-letter code: DNA-directed RNA polymerase subunit beta' (1171 aa).

Residues Cys60, Cys62, Cys75, and Cys78 each contribute to the Zn(2+) site. The disordered stretch occupies residues 299 to 319 (GRRGKPVTGPGNRPLKSLSDM). The Mg(2+) site is built by Asp449, Asp451, and Asp453. Residues Cys790, Cys864, Cys871, and Cys874 each contribute to the Zn(2+) site.

This sequence belongs to the RNA polymerase beta' chain family. In terms of assembly, the RNAP catalytic core consists of 2 alpha, 1 beta, 1 beta' and 1 omega subunit. When a sigma factor is associated with the core the holoenzyme is formed, which can initiate transcription. Mg(2+) is required as a cofactor. Requires Zn(2+) as cofactor.

It carries out the reaction RNA(n) + a ribonucleoside 5'-triphosphate = RNA(n+1) + diphosphate. Functionally, DNA-dependent RNA polymerase catalyzes the transcription of DNA into RNA using the four ribonucleoside triphosphates as substrates. This chain is DNA-directed RNA polymerase subunit beta', found in Alkaliphilus metalliredigens (strain QYMF).